The primary structure comprises 332 residues: NADH-quinone oxidoreductase subunit H (332 aa).

Transmembrane regions (helical) follow at residues T11–L31, V77–I97, V110–G130, I156–I176, L182–E202, N240–I260, I268–V288, and I307–N327.

This sequence belongs to the complex I subunit 1 family. NDH-1 is composed of 14 different subunits. Subunits NuoA, H, J, K, L, M, N constitute the membrane sector of the complex.

The protein localises to the cell inner membrane. The catalysed reaction is a quinone + NADH + 5 H(+)(in) = a quinol + NAD(+) + 4 H(+)(out). Its function is as follows. NDH-1 shuttles electrons from NADH, via FMN and iron-sulfur (Fe-S) centers, to quinones in the respiratory chain. The immediate electron acceptor for the enzyme in this species is believed to be ubiquinone. Couples the redox reaction to proton translocation (for every two electrons transferred, four hydrogen ions are translocated across the cytoplasmic membrane), and thus conserves the redox energy in a proton gradient. This subunit may bind ubiquinone. This Pelagibacter ubique (strain HTCC1062) protein is NADH-quinone oxidoreductase subunit H.